A 96-amino-acid chain; its full sequence is DNA-directed RNA polymerase subunit Rpo11 (96 aa).

The protein belongs to the archaeal Rpo11/eukaryotic RPB11/RPC19 RNA polymerase subunit family. As to quaternary structure, part of the RNA polymerase complex.

It localises to the cytoplasm. It catalyses the reaction RNA(n) + a ribonucleoside 5'-triphosphate = RNA(n+1) + diphosphate. In terms of biological role, DNA-dependent RNA polymerase (RNAP) catalyzes the transcription of DNA into RNA using the four ribonucleoside triphosphates as substrates. In Nanoarchaeum equitans (strain Kin4-M), this protein is DNA-directed RNA polymerase subunit Rpo11.